The primary structure comprises 103 residues: Co-chaperonin GroES (103 aa).

It belongs to the GroES chaperonin family. As to quaternary structure, heptamer of 7 subunits arranged in a ring. Interacts with the chaperonin GroEL.

The protein resides in the cytoplasm. Together with the chaperonin GroEL, plays an essential role in assisting protein folding. The GroEL-GroES system forms a nano-cage that allows encapsulation of the non-native substrate proteins and provides a physical environment optimized to promote and accelerate protein folding. GroES binds to the apical surface of the GroEL ring, thereby capping the opening of the GroEL channel. This Prochlorococcus marinus (strain MIT 9313) protein is Co-chaperonin GroES.